The sequence spans 421 residues: Tyrosine--tRNA ligase (421 aa).

Y38 lines the L-tyrosine pocket. The 'HIGH' region signature appears at 43–52 (PTGDSLHIGH). Residues Y169 and Q173 each coordinate L-tyrosine. A 'KMSKS' region motif is present at residues 231 to 235 (KFGKS). Residue K234 coordinates ATP. The 67-residue stretch at 353–419 (KNLVDFLVDT…GKKKYTLVHI (67 aa)) folds into the S4 RNA-binding domain.

It belongs to the class-I aminoacyl-tRNA synthetase family. TyrS type 1 subfamily. As to quaternary structure, homodimer.

Its subcellular location is the cytoplasm. The catalysed reaction is tRNA(Tyr) + L-tyrosine + ATP = L-tyrosyl-tRNA(Tyr) + AMP + diphosphate + H(+). Its function is as follows. Catalyzes the attachment of tyrosine to tRNA(Tyr) in a two-step reaction: tyrosine is first activated by ATP to form Tyr-AMP and then transferred to the acceptor end of tRNA(Tyr). The protein is Tyrosine--tRNA ligase of Lactobacillus delbrueckii subsp. bulgaricus (strain ATCC 11842 / DSM 20081 / BCRC 10696 / JCM 1002 / NBRC 13953 / NCIMB 11778 / NCTC 12712 / WDCM 00102 / Lb 14).